We begin with the raw amino-acid sequence, 84 residues long: Beta-mammal/insect toxin Ts1 (84 aa).

Positions 1-20 are cleaved as a signal peptide; it reads MKGMILFISCLLLIGIVVEC. The LCN-type CS-alpha/beta domain maps to 21–82; sequence KEGYLMDHEG…VWDRATNKCG (62 aa). Disulfide bonds link C31–C81, C35–C57, C43–C62, and C47–C64. A Cysteine amide modification is found at C81.

It belongs to the long (4 C-C) scorpion toxin superfamily. Sodium channel inhibitor family. Post-translationally, C-terminal amidation is important for high activity. In terms of tissue distribution, expressed by the venom gland.

The protein resides in the secreted. Voltage-gated sodium channels (Nav) gating-modifier. Acts both as alpha- and beta-toxin, since it affects not only activation but also inactivation of Nav channels. Binds to Nav domain DII and impairs the four Nav channel voltage sensors movements. Depending on Nav channel subtypes tested, can also bind Nav domains DIII (low affinity) and DIV (very low affinity). Acts on almost all the Nav channels tested (mammalian Nav1.2/SCN2A, Nav1.3/SCN3A, Nav1.4/SCN4A, Nav1.5/SCN5A, Nav1.6/SCN8A, Nav1.9/SCN11A, and insect DmNav1). Is highly active against both mammals and insects. Irreversibly modulates DmNav channels. Other Ts1 activities have been studied, such as immunomodulation, antimicrobial activity or exocrine secretion. This toxin exhibits an antifungal activity against filamentous fungi. In vitro, it has an important immunomodulatory effect on macrophages by stimulating the release of pro-inflammatory cytokines. It also shows an activity in exocrine secretion in pancreas, stomach and adrenal gland. This is Beta-mammal/insect toxin Ts1 from Tityus serrulatus (Brazilian scorpion).